Here is a 713-residue protein sequence, read N- to C-terminus: Constitutive lysine decarboxylase (713 aa).

Lys367 carries the N6-(pyridoxal phosphate)lysine modification.

This sequence belongs to the Orn/Lys/Arg decarboxylase class-I family. In terms of assembly, homodecamer; built of five dimers associated in a 5-fold symmetrical double-ring. Pyridoxal 5'-phosphate serves as cofactor.

The enzyme catalyses L-lysine + H(+) = cadaverine + CO2. Its function is as follows. Plays a role in lysine utilization by acting as a lysine decarboxylase. In Escherichia coli (strain K12), this protein is Constitutive lysine decarboxylase (ldcC).